The sequence spans 229 residues: Ribosome maturation factor RimM (229 aa).

The interval 1 to 21 (MAGHDSGNAKRGRSPSFGVFV) is disordered. Residues 148-229 (ADEFYWVDLI…RVVVDWEADY (82 aa)) enclose the PRC barrel domain.

It belongs to the RimM family. Binds ribosomal protein uS19.

The protein localises to the cytoplasm. An accessory protein needed during the final step in the assembly of 30S ribosomal subunit, possibly for assembly of the head region. Essential for efficient processing of 16S rRNA. May be needed both before and after RbfA during the maturation of 16S rRNA. It has affinity for free ribosomal 30S subunits but not for 70S ribosomes. In Burkholderia pseudomallei (strain 1106a), this protein is Ribosome maturation factor RimM.